Consider the following 459-residue polypeptide: GTPase Der (459 aa).

EngA-type G domains lie at 4 to 169 and 179 to 355; these read PLVA…PEVT and IAVS…AAHR. GTP contacts are provided by residues 10–17, 57–61, 120–123, 185–192, 232–236, and 297–300; these read GRPNVGKS, DTGGL, NKCE, DTAGI, and NKWD. In terms of domain architecture, KH-like spans 356-441; sequence KRVPTAVVNE…PIRFLWRGKS (86 aa).

The protein belongs to the TRAFAC class TrmE-Era-EngA-EngB-Septin-like GTPase superfamily. EngA (Der) GTPase family. As to quaternary structure, associates with the 50S ribosomal subunit.

Its function is as follows. GTPase that plays an essential role in the late steps of ribosome biogenesis. The polypeptide is GTPase Der (Synechococcus sp. (strain JA-2-3B'a(2-13)) (Cyanobacteria bacterium Yellowstone B-Prime)).